The following is a 210-amino-acid chain: Large ribosomal subunit protein bL25 (210 aa).

The segment at 186–210 (ISSASTEKEAESNQESTSTTPSSES) is disordered. Over residues 198–210 (NQESTSTTPSSES) the composition is skewed to low complexity.

This sequence belongs to the bacterial ribosomal protein bL25 family. CTC subfamily. Part of the 50S ribosomal subunit; part of the 5S rRNA/L5/L18/L25 subcomplex. Contacts the 5S rRNA. Binds to the 5S rRNA independently of L5 and L18.

In terms of biological role, this is one of the proteins that binds to the 5S RNA in the ribosome where it forms part of the central protuberance. The chain is Large ribosomal subunit protein bL25 from Ehrlichia chaffeensis (strain ATCC CRL-10679 / Arkansas).